The following is a 126-amino-acid chain: Holo-[acyl-carrier-protein] synthase (126 aa).

Mg(2+)-binding residues include Asp-9 and Glu-58.

It belongs to the P-Pant transferase superfamily. AcpS family. It depends on Mg(2+) as a cofactor.

It is found in the cytoplasm. The catalysed reaction is apo-[ACP] + CoA = holo-[ACP] + adenosine 3',5'-bisphosphate + H(+). Functionally, transfers the 4'-phosphopantetheine moiety from coenzyme A to a Ser of acyl-carrier-protein. The chain is Holo-[acyl-carrier-protein] synthase from Klebsiella pneumoniae subsp. pneumoniae (strain ATCC 700721 / MGH 78578).